A 271-amino-acid chain; its full sequence is Neurexophilin-1 (271 aa).

Residues Met-1–Cys-21 form the signal peptide. Residues Ala-22 to Leu-97 form an II region. Residues Asn-23, Asn-68, Asn-93, Asn-146, Asn-156, and Asn-162 are each glycosylated (N-linked (GlcNAc...) asparagine). Residues Gln-98–Phe-176 form an III region. The segment at Asp-177–Asp-185 is IV (linker domain). A v (Cys-rich) region spans residues Ala-186–Gly-271.

This sequence belongs to the neurexophilin family.

The protein localises to the secreted. Its function is as follows. May be signaling molecules that resemble neuropeptides and that act by binding to alpha-neurexins and possibly other receptors. This is Neurexophilin-1 (NXPH1) from Homo sapiens (Human).